We begin with the raw amino-acid sequence, 4226 residues long: Guanylate cyclase alpha (4226 aa).

Over 1 to 104 (MSDSKKHYNE…SFIFKGLYEQ (104 aa)) the chain is Cytoplasmic. A helical transmembrane segment spans residues 105-125 (FLRLPNIWFLLISLLEFIPQY). Residues 126–131 (QNLSNY) are Extracellular-facing. N-linked (GlcNAc...) asparagine glycosylation is present at N127. The helical transmembrane segment at 132–152 (MYYSKHSSFFLLLFFICVSII) threads the bilayer. Residues 153–337 (KNIYEDSRRS…LGYVNKELNS (185 aa)) lie on the Cytoplasmic side of the membrane. The helical transmembrane segment at 338–358 (YTIIGLIFTFICVFISVLFKW) threads the bilayer. Residues 359–392 (TEDDKFRNGSHFFLITVKDNICESIVKYTLLYSN) lie on the Extracellular side of the membrane. N366 carries an N-linked (GlcNAc...) asparagine glycan. Residues 393–413 (IIPISILISVDLISILQSILI) traverse the membrane as a helical segment. At 414–2083 (ENDNHISTFE…FIYGSKHLYT (1670 aa)) the chain is on the cytoplasmic side. Disordered stretches follow at residues 552–572 (EHSQ…NNIC), 832–904 (SSKN…SNND), 968–989 (INNN…KSSS), and 1740–1765 (NINK…NNSN). Positions 558–570 (DNNNNNDNNNNNN) are enriched in low complexity. A compositionally biased stretch (acidic residues) spans 838 to 847 (TLDDPTELIS). A compositionally biased stretch (basic and acidic residues) spans 854 to 873 (LRDKYEHTSDKKNDTNKNRD). The span at 874–904 (GANNSNNNNNKDVSNNKNKNNNNYNYNSNND) shows a compositional bias: low complexity. The span at 1745 to 1754 (YKYDKNDKHN) shows a compositional bias: basic and acidic residues. Positions 1755–1765 (NNNNNNNNNSN) are enriched in low complexity. Residues 2084-2104 (ISIILYWNFFKNILLILPIFF) form a helical membrane-spanning segment. Over 2105–2119 (YQAYASWSCVKIYPE) the chain is Extracellular. The helical transmembrane segment at 2120-2140 (LLYTFFSIFWVFIPIIYYMFL) threads the bilayer. Over 2141-2169 (QHNLNYDILYNIPLFYALSRRRYNMNCFK) the chain is Cytoplasmic. The helical transmembrane segment at 2170–2190 (FLPWIFEAIFYSMIIYFFAYA) threads the bilayer. The Extracellular portion of the chain corresponds to 2191-2202 (ALKENSHLNNGE). Residues 2203-2223 (VITINTFGNICFIGCLLISIL) form a helical membrane-spanning segment. Over 2224–2235 (RLFLEGSLWSPS) the chain is Cytoplasmic. Residues 2236-2256 (ILITCFGCFLFVFFPSLLFIC) form a helical membrane-spanning segment. The Extracellular portion of the chain corresponds to 2257-2275 (FAYLSNEYIREVFRQTFLW). The chain crosses the membrane as a helical span at residues 2276–2296 (APLYVLLILWFSTCIISYIFI). At 2297–2787 (NFTKSILFPN…QIHKKNKFYK (491 aa)) the chain is on the cytoplasmic side. Residues 2477 to 2505 (NNDNNNDDNDNDNNNNNNNNDNYNNNDHN) form a disordered region. A compositionally biased stretch (low complexity) spans 2488–2502 (DNNNNNNNNDNYNNN). Residues 2788–2808 (TFTPWYRFIFLLLGVFFLYVW) form a helical membrane-spanning segment. Residues 2809-2828 (KLESSLSQLWNMPSDASTDV) lie on the Extracellular side of the membrane. Residues 2829–2849 (FILFLSLLLELVLLAATVTTF) traverse the membrane as a helical segment. At 2850–2860 (FSNIFIENFNK) the chain is on the cytoplasmic side. A helical transmembrane segment spans residues 2861–2881 (IISAVVILIITYHVVSYSVTH). The Extracellular portion of the chain corresponds to 2882–2900 (IDGVFQAVLFPLYTFVILR). The chain crosses the membrane as a helical span at residues 2901–2921 (LPFVNAVLCNIIFLGLFIIRF). At 2922–2930 (NGDHFLDKK) the chain is on the cytoplasmic side. A helical transmembrane segment spans residues 2931–2951 (GLAHYIPLFIGVDVFVGFVGY). Residues 2952-3008 (RLEYNQRKNFLLEYSVESSRRKQREILNTMLPPFVVDEMIYSELNEEGIPISLKAED) are Extracellular-facing. Residues 3009-3029 (ISTVTIIFCDIYDFQNIVASI) form a helical membrane-spanning segment. Residues 3013-3270 (TIIFCDIYDF…DTVNTASRMK (258 aa)) enclose the Guanylate cyclase 1 domain. Residues 3030 to 3738 (EPTRLVEVLD…SNINSIEQAL (709 aa)) lie on the Cytoplasmic side of the membrane. Disordered regions lie at residues 3077–3150 (EDEL…FEED) and 3201–3230 (DAND…NNKP). Low complexity-rich tracts occupy residues 3083-3098 (NKYS…NYYY) and 3108-3138 (NNNN…NNVN). The segment covering 3140–3150 (SDDDGDFFEED) has biased composition (acidic residues). Residues 3201–3220 (DANDDTHNVNDSFNNDKAEN) are compositionally biased toward basic and acidic residues. The helical transmembrane segment at 3739 to 3759 (IIFLVTFVMQTLISSTVSIVF) threads the bilayer. Topologically, residues 3760–3773 (IDHKRATQTLHINY) are extracellular. The helical transmembrane segment at 3774–3794 (FAYWSVRSVYTFFGFVLWLLF) threads the bilayer. The Cytoplasmic portion of the chain corresponds to 3795–3811 (HYRTRPEVSSLLNIKWM). A helical transmembrane segment spans residues 3812 to 3832 (IFFLNLLFISAACVFSIAYLW). The Extracellular portion of the chain corresponds to 3833–3840 (AISETDQT). A helical transmembrane segment spans residues 3841–3861 (TSYTIWMTNDTIEFFFYLVIL). Residues 3862–3871 (HHNTGMLFQT) are Cytoplasmic-facing. A helical membrane pass occupies residues 3872–3892 (CILVDLLFITMSLTFIATSVV). Position 3893 (K3893) is a topological domain, extracellular. Residues 3894–3914 (TITTDSTVLLIPWYVAFNLIS) form a helical membrane-spanning segment. Residues 3915–4226 (TYCKESIDRR…INVNDRQSNL (312 aa)) lie on the Cytoplasmic side of the membrane. One can recognise a Guanylate cyclase 2 domain in the interval 3970–4104 (TFLFADICGF…IDVLTGNLME (135 aa)). D3975, I3976, and D4019 together coordinate Mg(2+).

It in the N-terminal section; belongs to the cation transport ATPase (P-type) (TC 3.A.3) family. Type IV subfamily. This sequence in the C-terminal section; belongs to the adenylyl cyclase class-4/guanylyl cyclase family. Mg(2+) serves as cofactor. It depends on Mn(2+) as a cofactor.

The protein resides in the cell membrane. It is found in the cytoplasmic vesicle membrane. The enzyme catalyses GTP = 3',5'-cyclic GMP + diphosphate. Functionally, catalyzes the synthesis of the second messenger cGMP from GTP. In asexual blood stage schizonts, required for cGMP production which is essential for PKG activation, PKG-dependent Ca(2+) release, and ultimately merozoite egress from host erythrocytes. In Plasmodium falciparum (isolate 3D7), this protein is Guanylate cyclase alpha.